We begin with the raw amino-acid sequence, 398 residues long: Putative L-rhamnonate dehydratase (398 aa).

Substrate is bound by residues His29 and Arg55. Asp221, Glu247, and Glu274 together coordinate Mg(2+). His324 functions as the Proton acceptor in the catalytic mechanism. Glu344 is a substrate binding site.

It belongs to the mandelate racemase/muconate lactonizing enzyme family. RhamD subfamily. Requires Mg(2+) as cofactor.

The enzyme catalyses L-rhamnonate = 2-dehydro-3-deoxy-L-rhamnonate + H2O. Catalyzes the dehydration of L-rhamnonate to 2-keto-3-deoxy-L-rhamnonate (KDR). This chain is Putative L-rhamnonate dehydratase, found in Caldivirga maquilingensis (strain ATCC 700844 / DSM 13496 / JCM 10307 / IC-167).